Here is an 831-residue protein sequence, read N- to C-terminus: Probable beta-glucosidase H (831 aa).

Asn-13 carries N-linked (GlcNAc...) asparagine glycosylation. The active site involves Asp-225. The PA14 domain occupies 389-549; the sequence is RLLSNAVIHF…DAEEMINRAV (161 aa). Asn-474, Asn-514, Asn-604, Asn-629, Asn-726, and Asn-823 each carry an N-linked (GlcNAc...) asparagine glycan.

It belongs to the glycosyl hydrolase 3 family.

It localises to the secreted. The catalysed reaction is Hydrolysis of terminal, non-reducing beta-D-glucosyl residues with release of beta-D-glucose.. It participates in glycan metabolism; cellulose degradation. In terms of biological role, beta-glucosidases are one of a number of cellulolytic enzymes involved in the degradation of cellulosic biomass. Catalyzes the last step releasing glucose from the inhibitory cellobiose. In Emericella nidulans (strain FGSC A4 / ATCC 38163 / CBS 112.46 / NRRL 194 / M139) (Aspergillus nidulans), this protein is Probable beta-glucosidase H (bglH).